The following is a 213-amino-acid chain: Adenylate kinase (213 aa).

Residue 10 to 15 (GSGKGT) coordinates ATP. Residues 30–59 (STGDMLRTTVNKESVLGKNIQAIIKLGNLV) form an NMP region. AMP contacts are provided by residues T31, R36, 57–59 (NLV), 85–88 (GFPR), and Q92. The interval 122-159 (GRMVHEPSGRIYHVTFNPPKQKGKDDITGENLIIRQDD) is LID. Residues R123 and 132–133 (IY) each bind ATP. 2 residues coordinate AMP: R156 and R167. C199 contributes to the ATP binding site.

Belongs to the adenylate kinase family. In terms of assembly, monomer.

The protein localises to the cytoplasm. It catalyses the reaction AMP + ATP = 2 ADP. The protein operates within purine metabolism; AMP biosynthesis via salvage pathway; AMP from ADP: step 1/1. Catalyzes the reversible transfer of the terminal phosphate group between ATP and AMP. Plays an important role in cellular energy homeostasis and in adenine nucleotide metabolism. This Baumannia cicadellinicola subsp. Homalodisca coagulata protein is Adenylate kinase.